A 142-amino-acid polypeptide reads, in one-letter code: HTH-type transcriptional regulator MntR (142 aa).

Positions 1-63 constitute an HTH dtxR-type domain; sequence MPTPSMEDYI…YEKYRGLILT (63 aa). Positions 8, 11, 77, 99, 102, and 103 each coordinate Mn(2+).

It belongs to the DtxR/MntR family. Homodimer.

It is found in the cytoplasm. DNA binding is strongly activated by Mn(2+). Functionally, central regulator of manganese homeostasis. The sequence is that of HTH-type transcriptional regulator MntR from Listeria monocytogenes serotype 4b (strain CLIP80459).